A 224-amino-acid chain; its full sequence is Large ribosomal subunit protein uL16z (224 aa).

It belongs to the universal ribosomal protein uL16 family. In terms of assembly, component of the small ribosomal subunit. Mature ribosomes consist of a small (40S) and a large (60S) subunit. The 40S subunit contains about 33 different proteins and 1 molecule of RNA (18S). The 60S subunit contains about 49 different proteins and 3 molecules of RNA (25S, 5.8S and 5S).

The chain is Large ribosomal subunit protein uL16z (SC34) from Oryza sativa subsp. indica (Rice).